Reading from the N-terminus, the 259-residue chain is 3-deoxy-manno-octulosonate cytidylyltransferase (259 aa).

The protein belongs to the KdsB family.

It localises to the cytoplasm. The enzyme catalyses 3-deoxy-alpha-D-manno-oct-2-ulosonate + CTP = CMP-3-deoxy-beta-D-manno-octulosonate + diphosphate. The protein operates within nucleotide-sugar biosynthesis; CMP-3-deoxy-D-manno-octulosonate biosynthesis; CMP-3-deoxy-D-manno-octulosonate from 3-deoxy-D-manno-octulosonate and CTP: step 1/1. It participates in bacterial outer membrane biogenesis; lipopolysaccharide biosynthesis. In terms of biological role, activates KDO (a required 8-carbon sugar) for incorporation into bacterial lipopolysaccharide in Gram-negative bacteria. In Nitrosococcus oceani (strain ATCC 19707 / BCRC 17464 / JCM 30415 / NCIMB 11848 / C-107), this protein is 3-deoxy-manno-octulosonate cytidylyltransferase.